Here is a 497-residue protein sequence, read N- to C-terminus: Probable cytosol aminopeptidase (497 aa).

Lys263 and Asp268 together coordinate Mn(2+). Lys275 is an active-site residue. Residues Asp286, Asp345, and Glu347 each coordinate Mn(2+). Residue Arg349 is part of the active site.

It belongs to the peptidase M17 family. Mn(2+) serves as cofactor.

The protein resides in the cytoplasm. It catalyses the reaction Release of an N-terminal amino acid, Xaa-|-Yaa-, in which Xaa is preferably Leu, but may be other amino acids including Pro although not Arg or Lys, and Yaa may be Pro. Amino acid amides and methyl esters are also readily hydrolyzed, but rates on arylamides are exceedingly low.. The enzyme catalyses Release of an N-terminal amino acid, preferentially leucine, but not glutamic or aspartic acids.. In terms of biological role, presumably involved in the processing and regular turnover of intracellular proteins. Catalyzes the removal of unsubstituted N-terminal amino acids from various peptides. In Rhizobium meliloti (strain 1021) (Ensifer meliloti), this protein is Probable cytosol aminopeptidase.